Here is an 87-residue protein sequence, read N- to C-terminus: Small ribosomal subunit protein bS16 (87 aa).

The protein belongs to the bacterial ribosomal protein bS16 family.

The protein is Small ribosomal subunit protein bS16 of Ehrlichia ruminantium (strain Welgevonden).